A 251-amino-acid chain; its full sequence is Triosephosphate isomerase (251 aa).

9-11 is a binding site for substrate; it reads NWK. Histidine 95 acts as the Electrophile in catalysis. Glutamate 167 (proton acceptor) is an active-site residue. Substrate is bound by residues glycine 173, serine 213, and 234–235; that span reads GG. Residue serine 213 is modified to Phosphoserine.

Belongs to the triosephosphate isomerase family. As to quaternary structure, homodimer.

It localises to the cytoplasm. The enzyme catalyses D-glyceraldehyde 3-phosphate = dihydroxyacetone phosphate. It functions in the pathway carbohydrate biosynthesis; gluconeogenesis. It participates in carbohydrate degradation; glycolysis; D-glyceraldehyde 3-phosphate from glycerone phosphate: step 1/1. Its function is as follows. Involved in the gluconeogenesis. Catalyzes stereospecifically the conversion of dihydroxyacetone phosphate (DHAP) to D-glyceraldehyde-3-phosphate (G3P). This is Triosephosphate isomerase from Shouchella clausii (strain KSM-K16) (Alkalihalobacillus clausii).